The chain runs to 1651 residues: A.superbus venom factor 2 (1651 aa).

A signal peptide spans 1–22 (MEGMALYLVAALLIGFPGSSHG). The N-linked (GlcNAc...) asparagine glycan is linked to Asn-189. Residues Pro-519, Asp-542, Val-543, and Asp-545 each contribute to the Mg(2+) site. 12 disulfides stabilise this stretch: Cys-547–Cys-808, Cys-616–Cys-651, Cys-684–Cys-711, Cys-685–Cys-718, Cys-698–Cys-719, Cys-864–Cys-1501, Cys-1346–Cys-1477, Cys-1377–Cys-1446, Cys-1494–Cys-1499, Cys-1506–Cys-1578, Cys-1525–Cys-1649, and Cys-1625–Cys-1634. A propeptide spanning residues 657-739 (RRRRSSVLLL…QRESELFLAR (83 aa)) is cleaved from the precursor. The segment at 661-739 (SSVLLLDSKA…QRESELFLAR (79 aa)) is C3a-like domain. The Anaphylatoxin-like domain occupies 684 to 719 (CCEDGMHENPMGYTCEKRAKYTQEGDACKAAFLECC). Residues 743–754 (EDEFFEEDNIIS) are factor B binding site. The propeptide occupies 992–1269 (HLIITPSGSG…VMVFQALAEY (278 aa)). The interval 992–1269 (HLIITPSGSG…VMVFQALAEY (278 aa)) is C3d-like domain. Positions 1197–1259 (VLMAASTGRD…GGTYGQTQAT (63 aa)) are factor H binding site. Asn-1282 and Asn-1352 each carry an N-linked (GlcNAc...) asparagine glycan. The NTR domain maps to 1506-1649 (CSLLNQQKKI…LSNTLTIFGC (144 aa)).

The protein belongs to the venom complement C3 homolog family. Heterotrimer of alpha, beta and gamma chains; disulfide-linked. Is active with factor B in the presence of factor D. Post-translationally, first processed by the removal of 4 Arg residues by furin-type protease, forming two chains, alpha and gamma/beta precursor, linked by a disulfide bond. This mature AVF is composed of three chains: alpha, gamma and beta. As to expression, expressed by the venom gland.

The protein localises to the secreted. Functionally, complement-activating protein in snake venom. It is a structural and functional analog of complement component C3b, the activated form of C3. It binds factor B (CFB), which is subsequently cleaved by factor D (CFD) to form the bimolecular complex AVF/Bb. AVF/Bb is a C3 convertase that cleaves complement component C3, but not C5 (as do CVF/Bb). The chain is A.superbus venom factor 2 from Austrelaps superbus (Lowland copperhead snake).